Here is a 94-residue protein sequence, read N- to C-terminus: Small ribosomal subunit protein bS18 (94 aa).

The protein belongs to the bacterial ribosomal protein bS18 family. In terms of assembly, part of the 30S ribosomal subunit. Forms a tight heterodimer with protein bS6.

Functionally, binds as a heterodimer with protein bS6 to the central domain of the 16S rRNA, where it helps stabilize the platform of the 30S subunit. The sequence is that of Small ribosomal subunit protein bS18 from Rickettsia bellii (strain OSU 85-389).